The primary structure comprises 131 residues: Classical arabinogalactan protein 1 (131 aa).

An N-terminal signal peptide occupies residues 1 to 22; it reads MAFSKSLVFVLLAALLISSAVA. The segment at 22 to 110 is disordered; the sequence is AQSPAPAPSN…APGPAQGGAV (89 aa). A compositionally biased stretch (pro residues) spans 50–60; that stretch reads APAPEVSPSPS. A compositionally biased stretch (low complexity) spans 61-72; sequence PAAALTPESSAS. Residue Gly-108 is the site of GPI-anchor amidated glycine attachment. Residues 109 to 131 constitute a propeptide, removed in mature form; it reads AVSNKFASFGSVAVMLTAAVLVI.

The protein belongs to the classical AGP family. In terms of processing, O-glycosylated on the hydroxyproline residues. As to expression, predominantly expressed in flowers and at a lower level in roots and leaves.

The protein resides in the cell membrane. Proteoglycan that seems to be implicated in diverse developmental roles such as differentiation, cell-cell recognition, embryogenesis and programmed cell death. This is Classical arabinogalactan protein 1 (AGP1) from Arabidopsis thaliana (Mouse-ear cress).